The following is a 1006-amino-acid chain: DNA polymerase (1006 aa).

The protein belongs to the DNA polymerase type-B family. As to quaternary structure, interacts with OPG148/A20. Component of the Uracil-DNA glycosylase(UDG)-OPG148/A20-polymerase complex; OPG148/A20 and OPG116/UDG form a heterodimeric processivity factor that associates with OPG071/E9 to form the processive polymerase holoenzyme.

The catalysed reaction is DNA(n) + a 2'-deoxyribonucleoside 5'-triphosphate = DNA(n+1) + diphosphate. Its function is as follows. Catalyzes DNA synthesis. Acquires processivity by associating with a heterodimeric processivity factor comprised of the viral OPG148/A20 and OPG116/D4 proteins, thereby forming the DNA polymerase holoenzyme. Displays 3'- to 5' exonuclease activity. Might participate in viral DNA recombination. Does not perform OPG116/D4synthesis across an abasic site. The sequence is that of DNA polymerase (OPG071) from Bos taurus (Bovine).